The chain runs to 588 residues: Proteasome-associated ATPase (588 aa).

Residues 1–10 (MAAHDDDINR) are compositionally biased toward basic and acidic residues. Residues 1–22 (MAAHDDDINRGTRPARGSEDPA) form a disordered region. Residues 47 to 94 (RILEERIVELQTNLAGVSAQNERLANTLREARDQIVALKEEVDRLAQP) adopt a coiled-coil conformation. ATP is bound at residue 276-281 (GCGKTL). A docks into pockets in the proteasome alpha-ring region spans residues 587-588 (YL).

This sequence belongs to the AAA ATPase family. In terms of assembly, homohexamer. Assembles into a hexameric ring structure that caps the 20S proteasome core. Strongly interacts with the prokaryotic ubiquitin-like protein Pup through a hydrophobic interface; the interacting region of ARC lies in its N-terminal coiled-coil domain. There is one Pup binding site per ARC hexamer ring. Upon ATP-binding, the C-terminus of ARC interacts with the alpha-rings of the proteasome core, possibly by binding to the intersubunit pockets.

The protein operates within protein degradation; proteasomal Pup-dependent pathway. ATPase which is responsible for recognizing, binding, unfolding and translocation of pupylated proteins into the bacterial 20S proteasome core particle. May be essential for opening the gate of the 20S proteasome via an interaction with its C-terminus, thereby allowing substrate entry and access to the site of proteolysis. Thus, the C-termini of the proteasomal ATPase may function like a 'key in a lock' to induce gate opening and therefore regulate proteolysis. The sequence is that of Proteasome-associated ATPase from Streptomyces griseus subsp. griseus (strain JCM 4626 / CBS 651.72 / NBRC 13350 / KCC S-0626 / ISP 5235).